Consider the following 305-residue polypeptide: Large ribosomal subunit protein uL2m (305 aa).

The N-terminal 60 residues, 1–60, are a transit peptide targeting the mitochondrion; it reads MALCALTRALRSLNLAPPTVAAPAPSLFPAAQMMNNGLLQQPSALMLLPCRPVLTSVALN. A disordered region spans residues 264 to 283; it reads RWLGKRPNSGRWHRKGGWAG. Positions 274–283 are enriched in basic residues; that stretch reads RWHRKGGWAG.

The protein belongs to the universal ribosomal protein uL2 family. In terms of assembly, component of the mitochondrial large ribosomal subunit (mt-LSU). Mature mammalian 55S mitochondrial ribosomes consist of a small (28S) and a large (39S) subunit. The 28S small subunit contains a 12S ribosomal RNA (12S mt-rRNA) and 30 different proteins. The 39S large subunit contains a 16S rRNA (16S mt-rRNA), a copy of mitochondrial valine transfer RNA (mt-tRNA(Val)), which plays an integral structural role, and 52 different proteins.

It localises to the mitochondrion. The sequence is that of Large ribosomal subunit protein uL2m (MRPL2) from Homo sapiens (Human).